We begin with the raw amino-acid sequence, 123 residues long: Ribosome-binding factor A (123 aa).

The protein belongs to the RbfA family. As to quaternary structure, monomer. Binds 30S ribosomal subunits, but not 50S ribosomal subunits or 70S ribosomes.

The protein resides in the cytoplasm. Its function is as follows. One of several proteins that assist in the late maturation steps of the functional core of the 30S ribosomal subunit. Associates with free 30S ribosomal subunits (but not with 30S subunits that are part of 70S ribosomes or polysomes). Required for efficient processing of 16S rRNA. May interact with the 5'-terminal helix region of 16S rRNA. The protein is Ribosome-binding factor A of Syntrophus aciditrophicus (strain SB).